Consider the following 108-residue polypeptide: Peptidyl-prolyl cis-trans isomerase FKBP1B (108 aa).

The 89-residue stretch at 20 to 108 (GQICVVHYTG…IFDVELLSLE (89 aa)) folds into the PPIase FKBP-type domain.

It belongs to the FKBP-type PPIase family. FKBP1 subfamily. As to quaternary structure, identified in a complex composed of RYR2, FKBP1B, PKA catalytic subunit, PRKAR2A, AKAP6, and the protein phosphatases PP2A and PP1. Interacts directly with RYR2.

The protein resides in the cytoplasm. The protein localises to the sarcoplasmic reticulum. The catalysed reaction is [protein]-peptidylproline (omega=180) = [protein]-peptidylproline (omega=0). Its activity is regulated as follows. Inhibited by both FK506 and rapamycin. Functionally, has the potential to contribute to the immunosuppressive and toxic effects of FK506 and rapamycin. PPIases accelerate the folding of proteins. It catalyzes the cis-trans isomerization of proline imidic peptide bonds in oligopeptides. This chain is Peptidyl-prolyl cis-trans isomerase FKBP1B (Fkbp1b), found in Mus musculus (Mouse).